A 189-amino-acid polypeptide reads, in one-letter code: Crossover junction endodeoxyribonuclease RuvC (189 aa).

Residues Asp-11, Glu-71, and Asp-143 contribute to the active site. 3 residues coordinate Mg(2+): Asp-11, Glu-71, and Asp-143.

This sequence belongs to the RuvC family. Homodimer which binds Holliday junction (HJ) DNA. The HJ becomes 2-fold symmetrical on binding to RuvC with unstacked arms; it has a different conformation from HJ DNA in complex with RuvA. In the full resolvosome a probable DNA-RuvA(4)-RuvB(12)-RuvC(2) complex forms which resolves the HJ. It depends on Mg(2+) as a cofactor.

Its subcellular location is the cytoplasm. It carries out the reaction Endonucleolytic cleavage at a junction such as a reciprocal single-stranded crossover between two homologous DNA duplexes (Holliday junction).. In terms of biological role, the RuvA-RuvB-RuvC complex processes Holliday junction (HJ) DNA during genetic recombination and DNA repair. Endonuclease that resolves HJ intermediates. Cleaves cruciform DNA by making single-stranded nicks across the HJ at symmetrical positions within the homologous arms, yielding a 5'-phosphate and a 3'-hydroxyl group; requires a central core of homology in the junction. The consensus cleavage sequence is 5'-(A/T)TT(C/G)-3'. Cleavage occurs on the 3'-side of the TT dinucleotide at the point of strand exchange. HJ branch migration catalyzed by RuvA-RuvB allows RuvC to scan DNA until it finds its consensus sequence, where it cleaves and resolves the cruciform DNA. The protein is Crossover junction endodeoxyribonuclease RuvC of Methylorubrum populi (strain ATCC BAA-705 / NCIMB 13946 / BJ001) (Methylobacterium populi).